A 436-amino-acid chain; its full sequence is GTPase Der (436 aa).

EngA-type G domains follow at residues 4 to 167 (PTVA…PVEE) and 175 to 351 (IRFS…ESQN). GTP is bound by residues 10–17 (GRPNVGKS), 57–61 (DTGGI), 119–122 (NKVD), 181–188 (GRPNVGKS), 229–233 (DTAGM), and 294–297 (NKWD). The 85-residue stretch at 352–436 (KRIPSAVLND…PINLIARKRK (85 aa)) folds into the KH-like domain.

Belongs to the TRAFAC class TrmE-Era-EngA-EngB-Septin-like GTPase superfamily. EngA (Der) GTPase family. In terms of assembly, associates with the 50S ribosomal subunit.

GTPase that plays an essential role in the late steps of ribosome biogenesis. The polypeptide is GTPase Der (Streptococcus agalactiae serotype III (strain NEM316)).